The sequence spans 607 residues: Zinc metalloproteinase-disintegrin-like atrase-A (607 aa).

A signal peptide spans 1-20 (MIQALLVIICLAVFPHQGSS). A propeptide spanning residues 21–196 (IILESGNVND…KTSQLTNTPE (176 aa)) is cleaved from the precursor. The Peptidase M12B domain occupies 205-398 (KYIEFYLVVD…ERPQCILNKP (194 aa)). Residue Glu208 coordinates Ca(2+). N-linked (GlcNAc...) asparagine glycans are attached at residues Asn220 and Asn270. Asp290 is a Ca(2+) binding site. N-linked (GlcNAc...) asparagine glycosylation is present at Asn301. 3 disulfide bridges follow: Cys314–Cys393, Cys353–Cys377, and Cys355–Cys360. Zn(2+) is bound by residues His338, His342, and His348. Ca(2+) is bound by residues Cys393, Asn396, Asn411, Phe413, Glu415, Glu418, and Asp421. The Disintegrin domain occupies 406–492 (RPVCGNNFVE…ECPTDSLQRN (87 aa)). Disulfide bonds link Cys409–Cys438, Cys420–Cys433, Cys422–Cys428, Cys432–Cys455, Cys446–Cys452, Cys451–Cys477, Cys464–Cys484, Cys471–Cys503, Cys496–Cys508, Cys515–Cys565, Cys530–Cys573, Cys543–Cys553, Cys560–Cys599, and Cys593–Cys604. The N-linked (GlcNAc...) asparagine glycan is linked to Asn434. Positions 470-472 (DCD) match the D/ECD-tripeptide motif. Ca(2+)-binding residues include Asp472, Leu473, Glu475, Asp487, and Ser488. An N-linked (GlcNAc...) asparagine glycan is attached at Asn522.

Belongs to the venom metalloproteinase (M12B) family. P-III subfamily. P-IIIa sub-subfamily. Monomer. Zn(2+) is required as a cofactor. Expressed by the venom gland.

It localises to the secreted. In terms of biological role, snake venom zinc metalloproteinase that inhibits platelet aggregation by cleaving platelet glycoprotein Ib alpha (GP1BA) at Glu-298/Asp-299, and abolishes binding of von Willebrand factor (VWF) to GPIBA. The sequence is that of Zinc metalloproteinase-disintegrin-like atrase-A from Naja atra (Chinese cobra).